Reading from the N-terminus, the 285-residue chain is NADH-dependent oxidoreductase ucdB (285 aa).

Residue Thr87 participates in NAD(+) binding. Residue Lys156 is part of the active site.

The protein belongs to the HIBADH-related family. NP60 subfamily.

It participates in secondary metabolite biosynthesis. Nonribosomal peptide synthetase that mediates the biosynthesis of usterphenyllins and uscandidusins, p-terphenyl derivatives. Within the pathway, ucdB alone catalyzes both reduction and dehydration of atromentin to form a terphenyl triol intermediate. The pathway begin with the biosynthesis of 4-hydroxyphenylpyruvate (HPPA) from L-tyrosine, possibly by the aminotransferase ucdG. The nonribosomal peptide synthetase ucdA then condenses two HPPA units to produce atromentin. The key step in this pathway is the reduction and dehydration of atromentin to form a terphenyl triol intermediate, performed by the NAD-dependent dehydrogenase ucdB. Further O-methylation by the methyltransferase ucdC forms terphenyllin carrying two methoxy moieties at C-9 and C-12, and subsequent dihydroxylation at C-3 of ring A and C-15 of ring C by the flavin-dependent oxygenase ucdD leads to 3,15-dihydroxyterphenyllin. Prenylation by ucdE at position C-5 of ring A forms usterphenyllin B, and is followed by a second prenylation at position C-14 of ring C to form usterphenyllin A. The following furan ring formation that leads to uscandidusins A and B was proven to be an unexpected spontaneous non-enzymatic reaction. The protein is NADH-dependent oxidoreductase ucdB of Aspergillus ustus.